The sequence spans 862 residues: Rab GTPase-binding effector protein 1 (862 aa).

A2 is subject to N-acetylalanine. A coiled-coil region spans residues 11–345; it reads DVSLQQRVAE…KKTDTEEEVK (335 aa). K282 bears the N6-acetyllysine mark. A disordered region spans residues 315 to 374; it reads ELKKKDQEEDEQQRVNKRKDNKKTDTEEEVKIPVVCALTQEESSTPLSNEEEHLDSTHGS. The span at 336–345 shows a compositional bias: basic and acidic residues; that stretch reads KKTDTEEEVK. A phosphoserine mark is found at S374, S377, and S407. At T408 the chain carries Phosphothreonine. S410 carries the post-translational modification Phosphoserine. A coiled-coil region spans residues 534 to 816; it reads DMCSNYEKQL…LQTELDVSEQ (283 aa).

Belongs to the rabaptin family. Heterodimer with RABGEF1. The heterodimer binds RAB4A and RAB5A that have been activated by GTP-binding. Interacts with TSC2. Interacts with GGA1 (via GAE domain), GGA2 (via GAE domain) and GGA3 (via GAE domain). Interacts with AP1G1 (via GAE domain). Interacts with AP1G2 (via GAE domain). Interacts with ECPAS. Interacts with KCNH1. Interacts with PKD1 (via C-terminal domain) and GGA1; the interactions recruit PKD1:PKD2 complex to GGA1 and ARL3 at trans-Golgi network. Interacts with KCNH1. Proteolytic cleavage by caspases in apoptotic cells causes loss of endosome fusion activity.

It is found in the cytoplasm. Its subcellular location is the early endosome. The protein resides in the recycling endosome. It localises to the cytoplasmic vesicle. Rab effector protein acting as linker between gamma-adaptin, RAB4A and RAB5A. Involved in endocytic membrane fusion and membrane trafficking of recycling endosomes. Involved in KCNH1 channels trafficking to and from the cell membrane. Stimulates RABGEF1 mediated nucleotide exchange on RAB5A. Mediates the traffic of PKD1:PKD2 complex from the endoplasmic reticulum through the Golgi to the cilium. The chain is Rab GTPase-binding effector protein 1 (Rabep1) from Mus musculus (Mouse).